The chain runs to 302 residues: Proline dehydrogenase 1 (302 aa).

K95 is a substrate binding site. D129 is a catalytic residue. M130 and Q158 together coordinate FAD. The active site involves R179. FAD is bound by residues 182-184 (KGA) and 221-222 (TH). 283–284 (RR) lines the substrate pocket.

Belongs to the proline dehydrogenase family. Requires FAD as cofactor.

The catalysed reaction is L-proline + a quinone = (S)-1-pyrroline-5-carboxylate + a quinol + H(+). It participates in amino-acid degradation; L-proline degradation into L-glutamate; L-glutamate from L-proline: step 1/2. Functionally, converts proline to delta-1-pyrroline-5-carboxylate. The polypeptide is Proline dehydrogenase 1 (fadM) (Bacillus subtilis (strain 168)).